A 292-amino-acid chain; its full sequence is ATP phosphoribosyltransferase (292 aa).

This sequence belongs to the ATP phosphoribosyltransferase family. Long subfamily. Requires Mg(2+) as cofactor.

It localises to the cytoplasm. It catalyses the reaction 1-(5-phospho-beta-D-ribosyl)-ATP + diphosphate = 5-phospho-alpha-D-ribose 1-diphosphate + ATP. It participates in amino-acid biosynthesis; L-histidine biosynthesis; L-histidine from 5-phospho-alpha-D-ribose 1-diphosphate: step 1/9. With respect to regulation, feedback inhibited by histidine. Functionally, catalyzes the condensation of ATP and 5-phosphoribose 1-diphosphate to form N'-(5'-phosphoribosyl)-ATP (PR-ATP). Has a crucial role in the pathway because the rate of histidine biosynthesis seems to be controlled primarily by regulation of HisG enzymatic activity. This is ATP phosphoribosyltransferase from Desulfatibacillum aliphaticivorans.